Consider the following 415-residue polypeptide: Cell wall mannoprotein PIR3 (415 aa).

A signal peptide spans 1–18 (MQYKKPLVVSALAATSLA). Positions 19–67 (AYAPKDPWSTLTPSATYKGGITDYSSSFGIAIEAVATSASSVASSKAKR) are excised as a propeptide. PIR1/2/3 repeat units follow at residues 66 to 84 (KRAA…TTTA), 92 to 109 (AAAV…AKST), 110 to 127 (AAAA…AKST), 128 to 145 (AAAV…AKST), 146 to 163 (AAAV…AKST), 164 to 181 (AAAV…AKST), 182 to 199 (AAAV…AKST), 200 to 217 (AAAA…AKST), 218 to 235 (AAAA…AKST), 236 to 253 (AAAA…AKST), 254 to 271 (AAAA…TTST), 272 to 288 (KAAA…ASKT), and 289 to 307 (TSGA…AEVK).

This sequence belongs to the PIR protein family. Post-translationally, covalently linked to beta-1,3-glucan of the inner cell wall layer via an alkali-sensitive ester linkage between the gamma-carboxyl group of glutamic acids, arising from specific glutamines within the PIR1/2/3 repeats, and hydroxyl groups of glucoses of beta-1,3-glucan chains. O-glycosylated. Extensively O-mannosylated.

It localises to the secreted. The protein localises to the cell wall. Component of the outer cell wall layer. Required for stability of the cell wall and for optimal growth. Required for resistance against several antifungal and cell wall-perturbing agents. In Saccharomyces cerevisiae (strain YJM789) (Baker's yeast), this protein is Cell wall mannoprotein PIR3 (PIR3).